The chain runs to 302 residues: Sulfate adenylyltransferase subunit 2 (302 aa).

Residues 280–302 (RQGRLIDSDQSASMEQKKRQGYF) are disordered.

It belongs to the PAPS reductase family. CysD subfamily. In terms of assembly, heterodimer composed of CysD, the smaller subunit, and CysN.

It carries out the reaction sulfate + ATP + H(+) = adenosine 5'-phosphosulfate + diphosphate. It participates in sulfur metabolism; hydrogen sulfide biosynthesis; sulfite from sulfate: step 1/3. With CysN forms the ATP sulfurylase (ATPS) that catalyzes the adenylation of sulfate producing adenosine 5'-phosphosulfate (APS) and diphosphate, the first enzymatic step in sulfur assimilation pathway. APS synthesis involves the formation of a high-energy phosphoric-sulfuric acid anhydride bond driven by GTP hydrolysis by CysN coupled to ATP hydrolysis by CysD. The chain is Sulfate adenylyltransferase subunit 2 from Shewanella oneidensis (strain ATCC 700550 / JCM 31522 / CIP 106686 / LMG 19005 / NCIMB 14063 / MR-1).